The chain runs to 263 residues: UDP-N-acetylenolpyruvoylglucosamine reductase (263 aa).

Arg-146 is an active-site residue. The active-site Proton donor is the Ser-188. Glu-258 is an active-site residue.

The protein belongs to the MurB family. FAD serves as cofactor.

The protein localises to the cytoplasm. The catalysed reaction is UDP-N-acetyl-alpha-D-muramate + NADP(+) = UDP-N-acetyl-3-O-(1-carboxyvinyl)-alpha-D-glucosamine + NADPH + H(+). It participates in cell wall biogenesis; peptidoglycan biosynthesis. Cell wall formation. This chain is UDP-N-acetylenolpyruvoylglucosamine reductase, found in Helicobacter hepaticus (strain ATCC 51449 / 3B1).